We begin with the raw amino-acid sequence, 140 residues long: Ribosome maturation factor RimP (140 aa).

Belongs to the RimP family.

It is found in the cytoplasm. In terms of biological role, required for maturation of 30S ribosomal subunits. This is Ribosome maturation factor RimP from Campylobacter lari (strain RM2100 / D67 / ATCC BAA-1060).